A 280-amino-acid chain; its full sequence is 4-hydroxy-3-methylbut-2-enyl diphosphate reductase (280 aa).

C12 lines the [4Fe-4S] cluster pocket. H40 and H72 together coordinate (2E)-4-hydroxy-3-methylbut-2-enyl diphosphate. Residues H40 and H72 each contribute to the dimethylallyl diphosphate site. Isopentenyl diphosphate-binding residues include H40 and H72. Residue C94 participates in [4Fe-4S] cluster binding. H122 contributes to the (2E)-4-hydroxy-3-methylbut-2-enyl diphosphate binding site. A dimethylallyl diphosphate-binding site is contributed by H122. Residue H122 participates in isopentenyl diphosphate binding. The active-site Proton donor is E124. A (2E)-4-hydroxy-3-methylbut-2-enyl diphosphate-binding site is contributed by T160. C188 provides a ligand contact to [4Fe-4S] cluster. S216, N218, and S260 together coordinate (2E)-4-hydroxy-3-methylbut-2-enyl diphosphate. Positions 216, 218, and 260 each coordinate dimethylallyl diphosphate. 3 residues coordinate isopentenyl diphosphate: S216, N218, and S260.

Belongs to the IspH family. [4Fe-4S] cluster is required as a cofactor.

The enzyme catalyses isopentenyl diphosphate + 2 oxidized [2Fe-2S]-[ferredoxin] + H2O = (2E)-4-hydroxy-3-methylbut-2-enyl diphosphate + 2 reduced [2Fe-2S]-[ferredoxin] + 2 H(+). The catalysed reaction is dimethylallyl diphosphate + 2 oxidized [2Fe-2S]-[ferredoxin] + H2O = (2E)-4-hydroxy-3-methylbut-2-enyl diphosphate + 2 reduced [2Fe-2S]-[ferredoxin] + 2 H(+). It participates in isoprenoid biosynthesis; dimethylallyl diphosphate biosynthesis; dimethylallyl diphosphate from (2E)-4-hydroxy-3-methylbutenyl diphosphate: step 1/1. The protein operates within isoprenoid biosynthesis; isopentenyl diphosphate biosynthesis via DXP pathway; isopentenyl diphosphate from 1-deoxy-D-xylulose 5-phosphate: step 6/6. Its function is as follows. Catalyzes the conversion of 1-hydroxy-2-methyl-2-(E)-butenyl 4-diphosphate (HMBPP) into a mixture of isopentenyl diphosphate (IPP) and dimethylallyl diphosphate (DMAPP). Acts in the terminal step of the DOXP/MEP pathway for isoprenoid precursor biosynthesis. This is 4-hydroxy-3-methylbut-2-enyl diphosphate reductase from Trichlorobacter lovleyi (strain ATCC BAA-1151 / DSM 17278 / SZ) (Geobacter lovleyi).